Here is a 799-residue protein sequence, read N- to C-terminus: ATP-dependent DNA helicase Hel308 (799 aa).

ATP contacts are provided by residues Q29 and 47–54 (IPTASGKT). The Helicase ATP-binding domain maps to 34-200 (EAGVTEGENL…WLDAGLVDSD (167 aa)). A DEAH box motif is present at residues 145-148 (DEVH). In terms of domain architecture, Helicase C-terminal spans 234 to 435 (QTAAIVRDTL…EPALRTHILA (202 aa)). Disordered stretches follow at residues 522-566 (RGAS…DRDP) and 750-799 (NVLE…LGDF). A compositionally biased stretch (acidic residues) spans 553–566 (LAEDADESDADRDP).

It belongs to the helicase family. Hel308 subfamily. In terms of assembly, monomer.

It catalyses the reaction Couples ATP hydrolysis with the unwinding of duplex DNA by translocating in the 3'-5' direction.. The enzyme catalyses ATP + H2O = ADP + phosphate + H(+). Its function is as follows. DNA-dependent ATPase and 3'-5' DNA helicase that may be involved in repair of stalled replication forks. This is ATP-dependent DNA helicase Hel308 from Haloarcula marismortui (strain ATCC 43049 / DSM 3752 / JCM 8966 / VKM B-1809) (Halobacterium marismortui).